Reading from the N-terminus, the 215-residue chain is Mediator of RNA polymerase II transcription subunit 20 (215 aa).

Belongs to the Mediator complex subunit 20 family. As to quaternary structure, component of the Mediator complex.

Its subcellular location is the nucleus. In terms of biological role, component of the Mediator complex, a coactivator involved in the regulated transcription of nearly all RNA polymerase II-dependent genes. Mediator functions as a bridge to convey information from gene-specific regulatory proteins to the basal RNA polymerase II transcription machinery. Mediator is recruited to promoters by direct interactions with regulatory proteins and serves as a scaffold for the assembly of a functional preinitiation complex with RNA polymerase II and the general transcription factors. This Candida glabrata (strain ATCC 2001 / BCRC 20586 / JCM 3761 / NBRC 0622 / NRRL Y-65 / CBS 138) (Yeast) protein is Mediator of RNA polymerase II transcription subunit 20 (SRB2).